The primary structure comprises 169 residues: uncharacterized protein (169 aa).

Helical transmembrane passes span 25–45 (ALMG…MSYF), 57–77 (FFWV…FGVF), and 91–111 (LFLI…FLMV).

This sequence belongs to the major facilitator superfamily. Allantoate permease family.

The protein localises to the membrane. This is an uncharacterized protein from Saccharomyces cerevisiae (strain ATCC 204508 / S288c) (Baker's yeast).